Here is a 462-residue protein sequence, read N- to C-terminus: Argininosuccinate lyase (462 aa).

This sequence belongs to the lyase 1 family. Argininosuccinate lyase subfamily.

The protein localises to the cytoplasm. The enzyme catalyses 2-(N(omega)-L-arginino)succinate = fumarate + L-arginine. It functions in the pathway amino-acid biosynthesis; L-arginine biosynthesis; L-arginine from L-ornithine and carbamoyl phosphate: step 3/3. This is Argininosuccinate lyase from Bacillus cereus (strain ZK / E33L).